Here is a 149-residue protein sequence, read N- to C-terminus: Large ribosomal subunit protein uL11 (149 aa).

The protein belongs to the universal ribosomal protein uL11 family. Part of the ribosomal stalk of the 50S ribosomal subunit. Interacts with L10 and the large rRNA to form the base of the stalk. L10 forms an elongated spine to which L12 dimers bind in a sequential fashion forming a multimeric L10(L12)X complex. Post-translationally, one or more lysine residues are methylated.

In terms of biological role, forms part of the ribosomal stalk which helps the ribosome interact with GTP-bound translation factors. This is Large ribosomal subunit protein uL11 from Methylobacterium nodulans (strain LMG 21967 / CNCM I-2342 / ORS 2060).